We begin with the raw amino-acid sequence, 120 residues long: Probable non-functional immunoglobulin kappa variable 2D-24 (120 aa).

The signal sequence occupies residues 1–19 (MRLLAQLLGLLMLWVPGSS). The region spanning 20 to 120 (GDIVMTQTPL…YYCTQATQFP (101 aa)) is the Ig-like domain. Positions 21-43 (DIVMTQTPLSSPVTLGQPASISF) are framework-1. The complementarity-determining-1 stretch occupies residues 44–59 (RSSQSLVHSDGNTYLS). Residues 60-74 (WLQQRPGQPPRLLIY) are framework-2. The segment at 75–81 (KVSNRFS) is complementarity-determining-2. The tract at residues 82-113 (GVPDRFSGSGAGTDFTLKISRVEAEDVGVYYC) is framework-3. Positions 114 to 120 (TQATQFP) are complementarity-determining-3.

Most probably, the immunoglobulin is not assembled due to incorrect folding of light chain. Immunoglobulins are composed of two identical heavy chains and two identical light chains; disulfide-linked.

Its subcellular location is the secreted. The protein resides in the cell membrane. In terms of biological role, probable non-functional open reading frame (ORF) of V region of the variable domain of immunoglobulin light chains. Non-functional ORF generally cannot participate in the synthesis of a productive immunoglobulin chain due to altered V-(D)-J or switch recombination and/or splicing site (at mRNA level) and/or conserved amino acid change (protein level). Immunoglobulins, also known as antibodies, are membrane-bound or secreted glycoproteins produced by B lymphocytes. In the recognition phase of humoral immunity, the membrane-bound immunoglobulins serve as receptors which, upon binding of a specific antigen, trigger the clonal expansion and differentiation of B lymphocytes into immunoglobulins-secreting plasma cells. Secreted immunoglobulins mediate the effector phase of humoral immunity, which results in the elimination of bound antigens. The antigen binding site is formed by the variable domain of one heavy chain, together with that of its associated light chain. Thus, each immunoglobulin has two antigen binding sites with remarkable affinity for a particular antigen. The variable domains are assembled by a process called V-(D)-J rearrangement and can then be subjected to somatic hypermutations which, after exposure to antigen and selection, allow affinity maturation for a particular antigen. This Homo sapiens (Human) protein is Probable non-functional immunoglobulin kappa variable 2D-24.